The primary structure comprises 229 residues: Ribonuclease 3 (229 aa).

An RNase III domain is found at 2-130 (FEKLQDVLCY…ILGAIFLDGG (129 aa)). Position 43 (Glu-43) interacts with Mg(2+). Asp-47 is a catalytic residue. 2 residues coordinate Mg(2+): Asp-116 and Glu-119. Glu-119 is a catalytic residue. In terms of domain architecture, DRBM spans 157 to 226 (DAKSTLQELT…AGLALELLEG (70 aa)).

Belongs to the ribonuclease III family. In terms of assembly, homodimer. Mg(2+) serves as cofactor.

The protein localises to the cytoplasm. The catalysed reaction is Endonucleolytic cleavage to 5'-phosphomonoester.. Digests double-stranded RNA. Involved in the processing of primary rRNA transcript to yield the immediate precursors to the large and small rRNAs (23S and 16S). Processes some mRNAs, and tRNAs when they are encoded in the rRNA operon. Processes pre-crRNA and tracrRNA of type II CRISPR loci if present in the organism. The polypeptide is Ribonuclease 3 (Oleidesulfovibrio alaskensis (strain ATCC BAA-1058 / DSM 17464 / G20) (Desulfovibrio alaskensis)).